The primary structure comprises 212 residues: Ion-translocating oxidoreductase complex subunit G (212 aa).

A helical membrane pass occupies residues 9 to 29; sequence ASLLGLFALLCTALVALVNQF. FMN phosphoryl threonine is present on Thr-176.

It belongs to the RnfG family. In terms of assembly, the complex is composed of six subunits: RnfA, RnfB, RnfC, RnfD, RnfE and RnfG. Requires FMN as cofactor.

It localises to the cell inner membrane. In terms of biological role, part of a membrane-bound complex that couples electron transfer with translocation of ions across the membrane. The sequence is that of Ion-translocating oxidoreductase complex subunit G from Shewanella loihica (strain ATCC BAA-1088 / PV-4).